A 177-amino-acid chain; its full sequence is Peptidyl-tRNA hydrolase (177 aa).

Tyr-14 is a binding site for tRNA. His-19 functions as the Proton acceptor in the catalytic mechanism. TRNA-binding residues include Phe-64, Asn-66, and Asn-112.

Belongs to the PTH family. In terms of assembly, monomer.

It is found in the cytoplasm. It catalyses the reaction an N-acyl-L-alpha-aminoacyl-tRNA + H2O = an N-acyl-L-amino acid + a tRNA + H(+). In terms of biological role, hydrolyzes ribosome-free peptidyl-tRNAs (with 1 or more amino acids incorporated), which drop off the ribosome during protein synthesis, or as a result of ribosome stalling. Catalyzes the release of premature peptidyl moieties from peptidyl-tRNA molecules trapped in stalled 50S ribosomal subunits, and thus maintains levels of free tRNAs and 50S ribosomes. This Latilactobacillus sakei (Lactobacillus sakei) protein is Peptidyl-tRNA hydrolase.